The sequence spans 211 residues: 3-demethoxyubiquinol 3-hydroxylase (211 aa).

Residues Glu-60, Glu-90, His-93, Glu-142, Glu-174, and His-177 each contribute to the Fe cation site.

It belongs to the COQ7 family. It depends on Fe cation as a cofactor.

It is found in the cell membrane. It catalyses the reaction a 5-methoxy-2-methyl-3-(all-trans-polyprenyl)benzene-1,4-diol + AH2 + O2 = a 3-demethylubiquinol + A + H2O. It functions in the pathway cofactor biosynthesis; ubiquinone biosynthesis. In terms of biological role, catalyzes the hydroxylation of 2-nonaprenyl-3-methyl-6-methoxy-1,4-benzoquinol during ubiquinone biosynthesis. This chain is 3-demethoxyubiquinol 3-hydroxylase, found in Francisella tularensis subsp. novicida (strain U112).